The primary structure comprises 830 residues: MNLQTSTNQTIGPYVIRSEIGRGSFAIVYKGKHTETNRVISIKSVLTKKLTKKLLENLESEISILKEIRHVHVVELIDCIKAGRFIHLVMEYCSLGDLSYFIRKREKFNSIPSLAWINIDHPPVYKAGLNETLVRHFTQQLASALQFLRSRSLIHRDVKPQNLLLQPPPTAAYLEEHPQFVGSPKLPMLKLADFGFARYLQTSSMAETLCGSPLYMAPEILRYEKYDAKADLWSVGAVLYEMAVGKPPFKAPNHVELLRRIQKAKDVIKFPEEAFIHPDIKTLICALLKQNPADRIDYDGFFSSIVVTTPLDDASTLTGSDIQDAVKEINIPSSSPAYITDFFPKSNPGAPAPPGGLLRQAFQAQGSSIQPSEITGRRVPHRYAQDGNTLPYTPVFPPESAPAASIFPPRLTSKQPIPMASPAKLTSDTSNKSSAYVVVDHHPIISSTQLSNESLTHEQSINGNSPSPNEGVFQGSFSPESAPVNNHAFPHTSRMQIPYMKPNAFPSNPTYIASTPVTQLRRAFEQATAHVPQSGGGARNKSALERALNVANARLNEVVVDGMTDNGNTSLPTKESNLDNNVNIIQPSLPDTGKRLLDVLESIAMKSNSVYHLAEVKLAQIIPSLSDEMKPGDTLLDRPLTPFSLVMLAKESYVLYERDIELLQVAFDGVAAFWANSEERASPDCQQAIEWFRQRYSESLEKSQFLREIIISQSAAHSLPTTKPVSASQLIYHRALDLSRNAATSELSGNDAQACLQNYRLAAHLLESLLESNFSTPDGANDSNNSVTIRNLIALITKRQELLQSKQIQANVANKVTESVAKITLAPNLA.

The region spanning 14-307 is the Protein kinase domain; that stretch reads YVIRSEIGRG…YDGFFSSIVV (294 aa). Residues 20-28 and Lys-43 each bind ATP; that span reads IGRGSFAIV. Asp-157 functions as the Proton acceptor in the catalytic mechanism. The residue at position 346 (Ser-346) is a Phosphoserine. Residues 448 to 468 are compositionally biased toward polar residues; sequence TQLSNESLTHEQSINGNSPSP. The tract at residues 448–480 is disordered; it reads TQLSNESLTHEQSINGNSPSPNEGVFQGSFSPE.

Belongs to the protein kinase superfamily. Ser/Thr protein kinase family. APG1/unc-51/ULK1 subfamily. As to quaternary structure, homodimer. Component of the atg1 kinase complex composed of at least atg1, atg13, atg17 and atg101. Interacts directly with atg13. In terms of processing, phosphorylated. Dephosphorylated under depletion of nitrogen.

It catalyses the reaction L-seryl-[protein] + ATP = O-phospho-L-seryl-[protein] + ADP + H(+). The catalysed reaction is L-threonyl-[protein] + ATP = O-phospho-L-threonyl-[protein] + ADP + H(+). Functionally, serine/threonine protein kinase involved in the cytoplasm to vacuole transport (Cvt) and found to be essential in autophagy, where it is required for the formation of autophagosomes. Involved in the clearance of protein aggregates which cannot be efficiently cleared by the proteasome. Required for selective autophagic degradation of the nucleus (nucleophagy) as well as for mitophagy which contributes to regulate mitochondrial quantity and quality by eliminating the mitochondria to a basal level to fulfill cellular energy requirements and preventing excess ROS production. Also involved in endoplasmic reticulum-specific autophagic process, in selective removal of ER-associated degradation (ERAD) substrates. Plays a key role in ATG9 and ATG23 cycling through the pre-autophagosomal structure and is necessary to promote ATG18 binding to ATG9 through phosphorylation of ATG9. Catalyzes phosphorylation of ATG4, decreasing the interaction between ATG4 and ATG8 and impairing deconjugation of PE-conjugated forms of ATG8. Autophagy functions to supply nitrogen and is activated when cells cannot access exogenous nitrogen, thus ensuring that they can adapt and subsequently propagate. Finally, atg13 is also required for glycogen storage during stationary phase and has a role in meiosis and sporulation. In Schizosaccharomyces pombe (strain 972 / ATCC 24843) (Fission yeast), this protein is Serine/threonine-protein kinase atg1.